An 802-amino-acid polypeptide reads, in one-letter code: Fibroblast growth factor receptor 4 (802 aa).

The signal sequence occupies residues 1 to 21 (MRLLLALLGVLLSVPGPPVLS). In terms of domain architecture, Ig-like C2-type 1 spans 22–118 (LEASEEVELE…VLQNLTLITG (97 aa)). Over 22 to 369 (LEASEEVELE…AAAPEARYTD (348 aa)) the chain is Extracellular. A disulfide bond links Cys57 and Cys101. Asn112 is a glycosylation site (N-linked (GlcNAc...) asparagine). The segment at 119–148 (DSLTSSNDDEDPKSHRDPSNRHSYPQQAPY) is disordered. Ig-like C2-type domains are found at residues 152 to 240 (PQRM…YLLD) and 249 to 349 (PILQ…AWLT). A disulfide bridge connects residues Cys172 and Cys224. N-linked (GlcNAc...) asparagine glycosylation is found at Asn258, Asn290, Asn311, and Asn322. An intrachain disulfide couples Cys271 to Cys333. Residues 370-390 (IILYASGSLALAVLLLLAGLY) traverse the membrane as a helical segment. Tyr390 carries the phosphotyrosine; in variant R-388 modification. The Cytoplasmic segment spans residues 391–802 (RGQALHGRHP…SFPFGSGVQT (412 aa)). A Protein kinase domain is found at 467-755 (LVLGKPLGEG…VLLAVSEEYL (289 aa)). ATP-binding positions include 473–481 (LGEGCFGQV) and Lys503. Ser573 is subject to Phosphoserine. Asp612 serves as the catalytic Proton acceptor. A phosphotyrosine; by autocatalysis mark is found at Tyr642, Tyr643, and Tyr754.

It belongs to the protein kinase superfamily. Tyr protein kinase family. Fibroblast growth factor receptor subfamily. As to quaternary structure, monomer. Homodimer after ligand binding. Interacts with FGF1, FGF2, FGF4, FGF6, FGF8, FGF9, FGF16, FGF17, FGF18, FGF19, FGF21 and FGF23 (in vitro). Binding affinity for FGF family members is enhanced by interactions between FGFs and heparan sulfate proteoglycans. Interacts with KLB; this strongly increases the affinity for FGF19 and FGF23. Affinity for FGF19 is strongly increased by KLB and sulfated glycosaminoglycans. KLB and KL both interact with the core-glycosylated FGFR4 in the endoplasmic reticulum and promote its degradation, so that only FGFR4 with fully mature N-glycans is expressed at the cell surface. Identified in a complex with NCAM1, CDH2, PLCG1, FRS2, SRC, SHC1, GAP43 and CTTN. Interacts with MMP14 and HIP1. Interacts with STAT3. Post-translationally, N-glycosylated. Full maturation of the glycan chains in the Golgi is essential for high affinity interaction with FGF19. Ubiquitinated. Subject to proteasomal degradation when not fully glycosylated. In terms of processing, autophosphorylated. Binding of FGF family members together with heparan sulfate proteoglycan or heparin promotes receptor dimerization and autophosphorylation on tyrosine residues. Autophosphorylation occurs in trans between the two FGFR molecules present in the dimer. In terms of tissue distribution, expressed in gastrointestinal epithelial cells, pancreas, and gastric and pancreatic cancer cell lines.

It is found in the cell membrane. It localises to the endosome. The protein localises to the endoplasmic reticulum. Its subcellular location is the secreted. It catalyses the reaction L-tyrosyl-[protein] + ATP = O-phospho-L-tyrosyl-[protein] + ADP + H(+). With respect to regulation, present in an inactive conformation in the absence of bound ligand. Ligand binding leads to dimerization and activation by autophosphorylation on tyrosine residues. Functionally, tyrosine-protein kinase that acts as a cell-surface receptor for fibroblast growth factors and plays a role in the regulation of cell proliferation, differentiation and migration, and in regulation of lipid metabolism, bile acid biosynthesis, glucose uptake, vitamin D metabolism and phosphate homeostasis. Required for normal down-regulation of the expression of CYP7A1, the rate-limiting enzyme in bile acid synthesis, in response to FGF19. Phosphorylates PLCG1 and FRS2. Ligand binding leads to the activation of several signaling cascades. Activation of PLCG1 leads to the production of the cellular signaling molecules diacylglycerol and inositol 1,4,5-trisphosphate. Phosphorylation of FRS2 triggers recruitment of GRB2, GAB1, PIK3R1 and SOS1, and mediates activation of RAS, MAPK1/ERK2, MAPK3/ERK1 and the MAP kinase signaling pathway, as well as of the AKT1 signaling pathway. Promotes SRC-dependent phosphorylation of the matrix protease MMP14 and its lysosomal degradation. FGFR4 signaling is down-regulated by receptor internalization and degradation; MMP14 promotes internalization and degradation of FGFR4. Mutations that lead to constitutive kinase activation or impair normal FGFR4 inactivation lead to aberrant signaling. The protein is Fibroblast growth factor receptor 4 (FGFR4) of Homo sapiens (Human).